The primary structure comprises 55 residues: Large ribosomal subunit protein bL32 (55 aa).

The segment covering 1 to 23 (MAVPKKKTSKAKRDQRRAHWKRK) has biased composition (basic residues). The disordered stretch occupies residues 1–26 (MAVPKKKTSKAKRDQRRAHWKRKATI).

The protein belongs to the bacterial ribosomal protein bL32 family.

This is Large ribosomal subunit protein bL32 from Picosynechococcus sp. (strain ATCC 27264 / PCC 7002 / PR-6) (Agmenellum quadruplicatum).